The sequence spans 394 residues: NAD(P)H-quinone oxidoreductase subunit H (394 aa).

Belongs to the complex I 49 kDa subunit family. As to quaternary structure, NDH-1 can be composed of about 15 different subunits; different subcomplexes with different compositions have been identified which probably have different functions.

The protein localises to the cellular thylakoid membrane. It carries out the reaction a plastoquinone + NADH + (n+1) H(+)(in) = a plastoquinol + NAD(+) + n H(+)(out). The catalysed reaction is a plastoquinone + NADPH + (n+1) H(+)(in) = a plastoquinol + NADP(+) + n H(+)(out). In terms of biological role, NDH-1 shuttles electrons from an unknown electron donor, via FMN and iron-sulfur (Fe-S) centers, to quinones in the respiratory and/or the photosynthetic chain. The immediate electron acceptor for the enzyme in this species is believed to be plastoquinone. Couples the redox reaction to proton translocation, and thus conserves the redox energy in a proton gradient. Cyanobacterial NDH-1 also plays a role in inorganic carbon-concentration. This Nostoc sp. (strain PCC 7120 / SAG 25.82 / UTEX 2576) protein is NAD(P)H-quinone oxidoreductase subunit H.